The following is a 1555-amino-acid chain: UDP-glucose:glycoprotein glucosyltransferase 1 (1555 aa).

A signal peptide spans 1–42; it reads MGCKGDASGACAAGALPVTGVCYKMGVLVVLTVLWLFSSVKA. 2 N-linked (GlcNAc...) asparagine glycosylation sites follow: asparagine 536 and asparagine 1228. A glucosyltransferase region spans residues 1244–1555; the sequence is KTEEVKQDKD…REGPQKREEL (312 aa). The residue at position 1277 (serine 1277) is a Phosphoserine. The disordered stretch occupies residues 1534 to 1555; sequence GALYKEKTKEPSREGPQKREEL. The Prevents secretion from ER signature appears at 1552–1555; it reads REEL.

This sequence belongs to the glycosyltransferase 8 family. In terms of assembly, monomer as well as in a tight complex with SELENOF. Interacts with METTL23. Part of a large chaperone multiprotein complex comprising DNAJB11, HSP90B1, HSPA5, HYOU, PDIA2, PDIA4, PDIA6, PPIB, SDF2L1, UGGT1 and very small amounts of ERP29, but not, or at very low levels, CALR nor CANX. It depends on Ca(2+) as a cofactor. Requires Mn(2+) as cofactor. As to expression, higher levels in pancreas, skeletal muscle, kidney, and brain. Low levels in lung and heart.

The protein resides in the endoplasmic reticulum lumen. Its subcellular location is the endoplasmic reticulum-Golgi intermediate compartment. It catalyses the reaction N(4)-(alpha-D-Man-(1-&gt;2)-alpha-D-Man-(1-&gt;2)-alpha-D-Man-(1-&gt;3)-[alpha-D-Man-(1-&gt;2)-alpha-D-Man-(1-&gt;3)-[alpha-D-Man-(1-&gt;2)-alpha-D-Man-(1-&gt;6)]-alpha-D-Man-(1-&gt;6)]-beta-D-Man-(1-&gt;4)-beta-D-GlcNAc-(1-&gt;4)-beta-D-GlcNAc)-L-asparaginyl-[protein] (N-glucan mannose isomer 9A1,2,3B1,2,3) + UDP-alpha-D-glucose = N(4)-(alpha-D-Glc-(1-&gt;3)-alpha-D-Man-(1-&gt;2)-alpha-D-Man-(1-&gt;2)-alpha-D-Man-(1-&gt;3)-[alpha-D-Man-(1-&gt;2)-alpha-D-Man-(1-&gt;3)-[alpha-D-Man-(1-&gt;2)-alpha-D-Man-(1-&gt;6)]-alpha-D-Man-(1-&gt;6)]-beta-D-Man-(1-&gt;4)-beta-D-GlcNAc-(1-&gt;4)-beta-D-GlcNAc)-L-asparaginyl-[protein] + UDP + H(+). Its pathway is protein modification; protein glycosylation. With respect to regulation, catalytic activity is enhanced by complex formation with SELENOF. Functionally, recognizes glycoproteins with minor folding defects. Reglucosylates single N-glycans near the misfolded part of the protein, thus providing quality control for protein folding in the endoplasmic reticulum. Reglucosylated proteins are recognized by calreticulin for recycling to the endoplasmic reticulum and refolding or degradation. The chain is UDP-glucose:glycoprotein glucosyltransferase 1 (UGGT1) from Homo sapiens (Human).